We begin with the raw amino-acid sequence, 269 residues long: Regulating synaptic membrane exocytosis protein 4 (269 aa).

A C2 domain is found at Pro115–Tyr233. Phosphoserine occurs at positions 254 and 257.

Binds PPFIA3. Does not bind RAB3.

It localises to the synapse. Regulates synaptic membrane exocytosis. The chain is Regulating synaptic membrane exocytosis protein 4 (Rims4) from Mus musculus (Mouse).